Consider the following 425-residue polypeptide: Cyclin-K (425 aa).

The disordered stretch occupies residues 262 to 425 (GKQPIPQQPP…RRYLDDDRNL (164 aa)). Over residues 366-377 (AEPAAASELDPA) the composition is skewed to low complexity. Positions 379–399 (GPAPPLPHGAPPPLPHRPPPT) are enriched in pro residues.

It belongs to the cyclin family.

The protein resides in the nucleus. Regulatory subunit of cyclin-dependent kinases that mediates activation of target kinases. Plays a role in transcriptional regulation via its role in regulating the phosphorylation of the C-terminal domain (CTD) of the large subunit of RNA polymerase II (POLR2A). The polypeptide is Cyclin-K (ccnk) (Danio rerio (Zebrafish)).